The sequence spans 329 residues: Homeobox protein Nkx-3.2 (329 aa).

Positions 107 to 188 are disordered; it reads GLGSPCGGAP…PDPSPPDEDP (82 aa). Positions 110-124 are enriched in gly residues; that stretch reads SPCGGAPGAGAGGEP. Positions 138-160 are enriched in basic and acidic residues; it reads ELGRPGDIGERKKQRPLEARAKG. The homeobox DNA-binding region spans 202–261; the sequence is KKRSRAAFSHAQVFELERRFNHQRYLSGPERADLAASLKLTETQVKIWFQNRRYKTKRRQ.

The protein belongs to the NK-3 homeobox family. As to expression, first expressed in developing facial cartilage in early tailbud embryos, with expression localized to the basihyobranchial, palatoquadrate and possibly Meckel's cartilages. Shortly after, a second area of expression is seen in the musculature of the anterior gut. During late embryogenesis, gut expression extends into hindgut tissues. In adults, expressed at a high level in the kidney, pancreas, spleen and stomach and at a slightly lower level in the intestine, skeletal muscle and tongue. Adult heart, liver and lung show little or no expression.

The protein resides in the nucleus. This is Homeobox protein Nkx-3.2 (nkx3-2) from Xenopus laevis (African clawed frog).